Here is a 322-residue protein sequence, read N- to C-terminus: Cytochrome f (322 aa).

The N-terminal stretch at 1 to 35 (MQTRNTFSWTWIREEITRSISVSLMIYIITWSSIS) is a signal peptide. Heme-binding residues include Tyr-38, Cys-58, Cys-61, and His-62. A helical membrane pass occupies residues 288 to 308 (VQGLLFFLGSVVLAQIFLVLK).

It belongs to the cytochrome f family. The 4 large subunits of the cytochrome b6-f complex are cytochrome b6, subunit IV (17 kDa polypeptide, petD), cytochrome f and the Rieske protein, while the 4 small subunits are PetG, PetL, PetM and PetN. The complex functions as a dimer. Heme is required as a cofactor.

Its subcellular location is the plastid. It localises to the chloroplast thylakoid membrane. In terms of biological role, component of the cytochrome b6-f complex, which mediates electron transfer between photosystem II (PSII) and photosystem I (PSI), cyclic electron flow around PSI, and state transitions. The sequence is that of Cytochrome f from Aethionema grandiflorum (Persian stone-cress).